The following is a 379-amino-acid chain: UDP-4-amino-4-deoxy-L-arabinose--oxoglutarate aminotransferase (379 aa).

N6-(pyridoxal phosphate)lysine is present on lysine 182.

Belongs to the DegT/DnrJ/EryC1 family. ArnB subfamily. Homodimer. Requires pyridoxal 5'-phosphate as cofactor.

It catalyses the reaction UDP-4-amino-4-deoxy-beta-L-arabinose + 2-oxoglutarate = UDP-beta-L-threo-pentopyranos-4-ulose + L-glutamate. The protein operates within nucleotide-sugar biosynthesis; UDP-4-deoxy-4-formamido-beta-L-arabinose biosynthesis; UDP-4-deoxy-4-formamido-beta-L-arabinose from UDP-alpha-D-glucuronate: step 2/3. It participates in bacterial outer membrane biogenesis; lipopolysaccharide biosynthesis. In terms of biological role, catalyzes the conversion of UDP-4-keto-arabinose (UDP-Ara4O) to UDP-4-amino-4-deoxy-L-arabinose (UDP-L-Ara4N). The modified arabinose is attached to lipid A and is required for resistance to polymyxin and cationic antimicrobial peptides. The protein is UDP-4-amino-4-deoxy-L-arabinose--oxoglutarate aminotransferase of Shigella sonnei (strain Ss046).